We begin with the raw amino-acid sequence, 773 residues long: MIPRRHHFKPAPQPTVQVLQPPDEDAPSLTITMLGAGQEVGRSCCVIEHRGKKIVCDAGLHPAQPGIGALPFIDELDWSTVDAMLITHFHVDHAAALPYIMEKTNFKDGNGKVYMTHATKAIYGLTMMDTVRLNDQNPDTSGRLYDEADVQSSWQSTIAVDYHQDIVIAGGLRFTPYHAGHVLGASMFLIEIAGLKILYTGDYSREEDRHLVMAEIPPVKPDVMICESTFGVHTLPDRKEKEEQFTTLVANIVRRGGRCLMPIPSFGNGQELALLLDEYWNDHPELQNIPVYFASSLFQRGMRVYKTYVHTMNANIRSRFARRDNPFDFRFVKWLKDPQKLRENKGPCVIMSSPQFMSFGLSRDLLEEWAPDSKNGVIVTGYSIEGTMARTLLSEPDHIESLKGGNVPRRLTVKEISFGAHVDYAQNSKFIQEIGAQHVVLVHGEASQMGRLRAALRDTYAAKGQEINIHTPKNCEPLTLTFRQERMVKAIGSLAATRPEHGTSVKGLLVSKDFSYTLLSPADLHDFTGLSTSTIIQKQGVAISVDWAVVRWYLEGMYGEVEEGVEEEGKAAFIIMNGVQVVQISPTAVELRWKSSSSNDMIADSALALLLGIDGSPATAKLTASPNKHACNHSNSHSHTDLYPHTYPGDKSAKDVASNPEFERLRMFLEAHFGHVEGPNLRPPLPPGADGDGNDDKDKDGDDWLTMDVKLDNQTARIDLISMRVESESAELQKRVETVLEMALTTVKSLSQTFLGGGLDVDMVKVEPNESDS.

The disordered stretch occupies residues 1–22; it reads MIPRRHHFKPAPQPTVQVLQPP. Positions 88, 90, 92, 93, 181, and 202 each coordinate Zn(2+). The active-site Proton donor is the histidine 421. Histidine 443 serves as a coordination point for Zn(2+). Residues 624–637 are compositionally biased toward polar residues; sequence ASPNKHACNHSNSH. 2 disordered regions span residues 624-656 and 677-702; these read ASPN…AKDV and EGPN…KDGD.

The protein belongs to the metallo-beta-lactamase superfamily. RNA-metabolizing metallo-beta-lactamase-like family. CPSF2/YSH1 subfamily.

The protein localises to the nucleus. In terms of biological role, component of the cleavage factor I (CF I) involved in pre-mRNA 3'-end processing. In Cryptococcus neoformans var. neoformans serotype D (strain B-3501A) (Filobasidiella neoformans), this protein is Endoribonuclease YSH1 (YSH1).